A 130-amino-acid polypeptide reads, in one-letter code: Small ribosomal subunit protein uS9 (130 aa).

The disordered stretch occupies residues 109–130 (RMKERRKYGLKKARKAPQFSKR). Basic residues predominate over residues 111–130 (KERRKYGLKKARKAPQFSKR).

Belongs to the universal ribosomal protein uS9 family.

This Caldanaerobacter subterraneus subsp. tengcongensis (strain DSM 15242 / JCM 11007 / NBRC 100824 / MB4) (Thermoanaerobacter tengcongensis) protein is Small ribosomal subunit protein uS9.